The chain runs to 432 residues: Adenylosuccinate synthetase (432 aa).

GTP is bound by residues 13 to 19 (GDEGKGK) and 41 to 43 (GHT). Asp14 functions as the Proton acceptor in the catalytic mechanism. Mg(2+) contacts are provided by Asp14 and Gly41. Residues 14 to 17 (DEGK), 39 to 42 (NAGH), Thr130, Arg144, Gln225, Thr240, and Arg304 each bind IMP. The Proton donor role is filled by His42. 300–306 (AVTGRPR) is a substrate binding site. Residues Arg306, 332–334 (KLD), and 415–417 (STG) each bind GTP.

Belongs to the adenylosuccinate synthetase family. As to quaternary structure, homodimer. Requires Mg(2+) as cofactor.

Its subcellular location is the cytoplasm. It carries out the reaction IMP + L-aspartate + GTP = N(6)-(1,2-dicarboxyethyl)-AMP + GDP + phosphate + 2 H(+). It functions in the pathway purine metabolism; AMP biosynthesis via de novo pathway; AMP from IMP: step 1/2. Plays an important role in the de novo pathway of purine nucleotide biosynthesis. Catalyzes the first committed step in the biosynthesis of AMP from IMP. This Haemophilus influenzae (strain PittGG) protein is Adenylosuccinate synthetase.